Here is a 63-residue protein sequence, read N- to C-terminus: Small ribosomal subunit protein bS21 (63 aa).

This sequence belongs to the bacterial ribosomal protein bS21 family.

The chain is Small ribosomal subunit protein bS21 from Phocaeicola vulgatus (strain ATCC 8482 / DSM 1447 / JCM 5826 / CCUG 4940 / NBRC 14291 / NCTC 11154) (Bacteroides vulgatus).